The chain runs to 253 residues: Indole-3-glycerol phosphate synthase (253 aa).

It belongs to the TrpC family.

The enzyme catalyses 1-(2-carboxyphenylamino)-1-deoxy-D-ribulose 5-phosphate + H(+) = (1S,2R)-1-C-(indol-3-yl)glycerol 3-phosphate + CO2 + H2O. Its pathway is amino-acid biosynthesis; L-tryptophan biosynthesis; L-tryptophan from chorismate: step 4/5. The polypeptide is Indole-3-glycerol phosphate synthase (Bacillus anthracis (strain A0248)).